The primary structure comprises 339 residues: Fructose-1,6-bisphosphatase isozyme 2 (339 aa).

Residues 3 to 10 form an important for interaction with ALDOA region; sequence DRSPFETD. AMP is bound by residues Val18 and 28 to 32; that span reads TGELT. Mg(2+) contacts are provided by Asp69 and Glu98. 113-114 lines the AMP pocket; it reads KY. Mg(2+) is bound by residues Asp119, Leu121, and Asp122. Asp122 serves as a coordination point for substrate. Arg141 contributes to the AMP binding site. The short motif at 204 to 208 is the Nuclear localization signal element; sequence KKKGK. 213–216 is a substrate binding site; it reads NEGY. 2 positions are modified to phosphotyrosine: Tyr216 and Tyr219. Residues 245 to 249, Tyr265, and Lys275 contribute to the substrate site; that span reads YVGSM. Glu281 lines the Mg(2+) pocket.

This sequence belongs to the FBPase class 1 family. In terms of assembly, homotetramer. Interacts with ALDOA; the interaction blocks inhibition by physiological concentrations of AMP and reduces inhibition by Ca(2+). Interacts with alpha-actinin and F-actin. Mg(2+) serves as cofactor.

It localises to the cell junction. The protein resides in the cytoplasm. Its subcellular location is the nucleus. It is found in the myofibril. The protein localises to the sarcomere. It localises to the z line. It carries out the reaction beta-D-fructose 1,6-bisphosphate + H2O = beta-D-fructose 6-phosphate + phosphate. The protein operates within carbohydrate biosynthesis; gluconeogenesis. Its activity is regulated as follows. Subject to complex allosteric regulation. The enzyme can assume an active R-state, or an inactive T-state. Intermediate conformations may exist. AMP acts as an allosteric inhibitor. Fructose 2,6-bisphosphate acts as a competitive inhibitor. Strongly inhibited by Ca(2+). Its function is as follows. Catalyzes the hydrolysis of fructose 1,6-bisphosphate to fructose 6-phosphate in the presence of divalent cations and probably participates in glycogen synthesis from carbohydrate precursors, such as lactate. The chain is Fructose-1,6-bisphosphatase isozyme 2 (Fbp2) from Rattus norvegicus (Rat).